A 481-amino-acid chain; its full sequence is Aspartyl/glutamyl-tRNA(Asn/Gln) amidotransferase subunit B (481 aa).

This sequence belongs to the GatB/GatE family. GatB subfamily. As to quaternary structure, heterotrimer of A, B and C subunits.

It catalyses the reaction L-glutamyl-tRNA(Gln) + L-glutamine + ATP + H2O = L-glutaminyl-tRNA(Gln) + L-glutamate + ADP + phosphate + H(+). The enzyme catalyses L-aspartyl-tRNA(Asn) + L-glutamine + ATP + H2O = L-asparaginyl-tRNA(Asn) + L-glutamate + ADP + phosphate + 2 H(+). Functionally, allows the formation of correctly charged Asn-tRNA(Asn) or Gln-tRNA(Gln) through the transamidation of misacylated Asp-tRNA(Asn) or Glu-tRNA(Gln) in organisms which lack either or both of asparaginyl-tRNA or glutaminyl-tRNA synthetases. The reaction takes place in the presence of glutamine and ATP through an activated phospho-Asp-tRNA(Asn) or phospho-Glu-tRNA(Gln). This is Aspartyl/glutamyl-tRNA(Asn/Gln) amidotransferase subunit B from Pseudomonas paraeruginosa (strain DSM 24068 / PA7) (Pseudomonas aeruginosa (strain PA7)).